Reading from the N-terminus, the 292-residue chain is Galactinol synthase 2 (292 aa).

K65 is an active-site residue. Mn(2+) contacts are provided by D81, D83, and H218.

The protein belongs to the glycosyltransferase 8 family. Galactosyltransferase subfamily. It depends on a divalent metal cation as a cofactor. As to expression, present in phloem-associated intermediary cells. Weakly expressed in leaves.

It localises to the cytoplasm. The catalysed reaction is myo-inositol + UDP-alpha-D-galactose = alpha-D-galactosyl-(1-&gt;3)-1D-myo-inositol + UDP + H(+). Functionally, may promote plant stress tolerance. Galactinol synthase mainly involved in the biosynthesis of transport raffinose family oligosaccharides (RFOs) that function as osmoprotectants. The protein is Galactinol synthase 2 (GOLS2) of Ajuga reptans (Bugle).